We begin with the raw amino-acid sequence, 209 residues long: Uracil phosphoribosyltransferase (209 aa).

Residues R79, R104, and D131–S139 contribute to the 5-phospho-alpha-D-ribose 1-diphosphate site. Residues I194 and G199–A201 each bind uracil. A 5-phospho-alpha-D-ribose 1-diphosphate-binding site is contributed by D200.

It belongs to the UPRTase family. Requires Mg(2+) as cofactor.

It catalyses the reaction UMP + diphosphate = 5-phospho-alpha-D-ribose 1-diphosphate + uracil. It participates in pyrimidine metabolism; UMP biosynthesis via salvage pathway; UMP from uracil: step 1/1. With respect to regulation, allosterically activated by GTP. Functionally, catalyzes the conversion of uracil and 5-phospho-alpha-D-ribose 1-diphosphate (PRPP) to UMP and diphosphate. This Oceanobacillus iheyensis (strain DSM 14371 / CIP 107618 / JCM 11309 / KCTC 3954 / HTE831) protein is Uracil phosphoribosyltransferase.